A 176-amino-acid polypeptide reads, in one-letter code: RNA 2',3'-cyclic phosphodiesterase (176 aa).

The active-site Proton donor is the histidine 43. Short sequence motifs (HXTX) lie at residues 43 to 46 (HLTL) and 125 to 128 (HITL). The Proton acceptor role is filled by histidine 125.

This sequence belongs to the 2H phosphoesterase superfamily. ThpR family. Monomer.

The catalysed reaction is a 3'-end 2',3'-cyclophospho-ribonucleotide-RNA + H2O = a 3'-end 2'-phospho-ribonucleotide-RNA + H(+). In terms of biological role, hydrolyzes RNA 2',3'-cyclic phosphodiester to an RNA 2'-phosphomonoester. In vitro, can also ligate 5' and 3' half-tRNA molecules with 2',3'-cyclic phosphate and 5'-hydroxyl termini, respectively, to the product containing the 2'-5' phosphodiester linkage. This reaction does not require ATP and is reversible. The sequence is that of RNA 2',3'-cyclic phosphodiesterase from Escherichia coli (strain K12).